Reading from the N-terminus, the 101-residue chain is Small ribosomal subunit protein uS14 (101 aa).

This sequence belongs to the universal ribosomal protein uS14 family. Part of the 30S ribosomal subunit. Contacts proteins S3 and S10.

Functionally, binds 16S rRNA, required for the assembly of 30S particles and may also be responsible for determining the conformation of the 16S rRNA at the A site. The protein is Small ribosomal subunit protein uS14 of Enterobacter sp. (strain 638).